A 426-amino-acid polypeptide reads, in one-letter code: Cell cycle checkpoint control protein RAD9B (426 aa).

At serine 359 the chain carries Phosphoserine.

It belongs to the rad9 family. In terms of assembly, interacts with HUS1, HUS1B, RAD1, RAD9A and RAD17. As to expression, expressed in testis and skeletal muscle.

This Homo sapiens (Human) protein is Cell cycle checkpoint control protein RAD9B (RAD9B).